Consider the following 349-residue polypeptide: MVSNNAVIIKKYLDSTAGYPVIGEHLAFEKREFDLENAQVDEETPVLLKNIYTSVDPYLRMRMQSPKHASYIPPLELGKPFYNSTVAKVVKSTLDQYKPGMDVVFVSGWEEYTFVSKQALGFLQPINNPYKLPLIDFVGSLGMPSQTAYCGLKHIGKPKAGETIYISAASGAVGQMAGQLAKAMGLHVVGSVGSDEKFKICLDSGYDSVFNYKKESPFKALPRLCPKGIDIYFENVGGETMDAVLENMNLQGRIIFCGAISQYNNPNPYRVKNLGMVLVKSLTIQGFIVANILPQYQEQYFEEMPKLIAEGKIKYKCDVYDGLESAPEAFIGMLQGKNSGKTIVKIADE.

The protein belongs to the zinc-containing alcohol dehydrogenase family. Quinone oxidoreductase subfamily.

It localises to the cytoplasm. It is found in the nucleus. This chain is Zinc-type alcohol dehydrogenase-like protein PB24D3.08c, found in Schizosaccharomyces pombe (strain 972 / ATCC 24843) (Fission yeast).